The primary structure comprises 75 residues: MSNTAPGPTVANKRDEKHRHVVNVVLELPTEISEATHPVLATMLSKYTRMSSLFNDKCAFKLDLLRMIAVSRTRR.

It belongs to the herpesviridae small capsomere-interacting protein family. Interacts with the major capsid protein/MCP.

It localises to the virion. Its subcellular location is the host nucleus. Participates in the assembly of the infectious particles by decorating the outer surface of the capsid shell and thus forming a layer between the capsid and the tegument. Complexes composed of the capsid protein VP5 and UL48A assemble together in the host cytoplasm and are translocated to the nucleus, where they accumulate and participate in capsid assembly. Its function is as follows. Participates in the assembly of the infectious particles by decorating the outer surface of the capsid shell and thus forming a layer between the capsid and the tegument. Complexes composed of the major capsid protein and small capsomere-interacting protein/SCP assemble together in the host cytoplasm and are translocated to the nucleus, where they accumulate and participate in capsid assembly. In Homo sapiens (Human), this protein is Small capsomere-interacting protein.